A 490-amino-acid chain; its full sequence is Argininosuccinate lyase (490 aa).

The protein belongs to the lyase 1 family. Argininosuccinate lyase subfamily.

The protein localises to the cytoplasm. It catalyses the reaction 2-(N(omega)-L-arginino)succinate = fumarate + L-arginine. The protein operates within amino-acid biosynthesis; L-arginine biosynthesis; L-arginine from L-ornithine and carbamoyl phosphate: step 3/3. The protein is Argininosuccinate lyase of Bifidobacterium longum (strain DJO10A).